The following is a 201-amino-acid chain: Large ribosomal subunit protein uL4 (201 aa).

Residues 44–71 (RAQKTRAEVTGSGKKPWRQKGTGRARSG) are disordered.

Belongs to the universal ribosomal protein uL4 family. Part of the 50S ribosomal subunit.

One of the primary rRNA binding proteins, this protein initially binds near the 5'-end of the 23S rRNA. It is important during the early stages of 50S assembly. It makes multiple contacts with different domains of the 23S rRNA in the assembled 50S subunit and ribosome. Functionally, forms part of the polypeptide exit tunnel. In Enterobacter sp. (strain 638), this protein is Large ribosomal subunit protein uL4.